The primary structure comprises 231 residues: Ribonuclease 3 (231 aa).

In terms of domain architecture, RNase III spans 5–134; that stretch reads QKKLKNDYGL…FLGALFIDQG (130 aa). E47 contacts Mg(2+). D51 is a catalytic residue. Positions 120 and 123 each coordinate Mg(2+). The active site involves E123. Residues 160-229 form the DRBM domain; that stretch reads DYKTELQEVL…AENAIKGQNH (70 aa).

This sequence belongs to the ribonuclease III family. In terms of assembly, homodimer. It depends on Mg(2+) as a cofactor.

The protein resides in the cytoplasm. The enzyme catalyses Endonucleolytic cleavage to 5'-phosphomonoester.. In terms of biological role, digests double-stranded RNA. Involved in the processing of primary rRNA transcript to yield the immediate precursors to the large and small rRNAs (23S and 16S). Processes some mRNAs, and tRNAs when they are encoded in the rRNA operon. Processes pre-crRNA and tracrRNA of type II CRISPR loci if present in the organism. The protein is Ribonuclease 3 of Lactococcus lactis subsp. cremoris (strain MG1363).